The following is a 199-amino-acid chain: Recombination protein RecR (199 aa).

The C4-type zinc-finger motif lies at 58 to 73; sequence CSRCFYFTEEDPCPLC. Residues 81–176 form the Toprim domain; the sequence is QLICVVEEPQ…KVTRLAHGIP (96 aa).

It belongs to the RecR family.

Functionally, may play a role in DNA repair. It seems to be involved in an RecBC-independent recombinational process of DNA repair. It may act with RecF and RecO. The chain is Recombination protein RecR from Syntrophotalea carbinolica (strain DSM 2380 / NBRC 103641 / GraBd1) (Pelobacter carbinolicus).